The chain runs to 297 residues: Transcription factor MYB1R1 (297 aa).

The disordered stretch occupies residues 44-96 (DLSQYEHPNANNNNNGGDNNESSKVAQDEGYASADDAVQHQSNSGRERKRGVP). Residues 52–63 (NANNNNNGGDNN) show a composition bias toward low complexity. The region spanning 89-145 (RERKRGVPWTEEEHKLFLLGLQKVGKGDWRGISRNFVKTRTPTQVASHAQKYFLRRS) is the HTH myb-type domain. The H-T-H motif DNA-binding region spans 117-141 (WRGISRNFVKTRTPTQVASHAQKYF).

The protein resides in the nucleus. Its subcellular location is the cytoplasm. It localises to the cytosol. Functionally, binds selectively to the DNA sequence 5'-[GA]GATAA-3' and may act as a transcription factor involved in the regulation of drought-responsive genes. Enhances stomatal closure in response to abscisic acid (ABA). Confers drought and salt tolerance. The protein is Transcription factor MYB1R1 of Solanum tuberosum (Potato).